Consider the following 361-residue polypeptide: Histidinol-phosphate aminotransferase (361 aa).

Position 223 is an N6-(pyridoxal phosphate)lysine (Lys223).

This sequence belongs to the class-II pyridoxal-phosphate-dependent aminotransferase family. Histidinol-phosphate aminotransferase subfamily. In terms of assembly, homodimer. The cofactor is pyridoxal 5'-phosphate.

It catalyses the reaction L-histidinol phosphate + 2-oxoglutarate = 3-(imidazol-4-yl)-2-oxopropyl phosphate + L-glutamate. It participates in amino-acid biosynthesis; L-histidine biosynthesis; L-histidine from 5-phospho-alpha-D-ribose 1-diphosphate: step 7/9. The protein is Histidinol-phosphate aminotransferase of Deinococcus radiodurans (strain ATCC 13939 / DSM 20539 / JCM 16871 / CCUG 27074 / LMG 4051 / NBRC 15346 / NCIMB 9279 / VKM B-1422 / R1).